A 714-amino-acid chain; its full sequence is Transcription factor SFL2 (714 aa).

A DNA-binding region spans residues 15–134 (AFVHKLYTML…LVYIKRRSSS (120 aa)). Disordered stretches follow at residues 187-467 (YYQQ…VGVT), 565-658 (STSV…NNTN), and 670-714 (SHSQ…NMNK). Pro residues-rich tracts occupy residues 193-207 (GQVP…PPHQ) and 223-235 (QPPP…PPQP). Residues 266-275 (LDQTQPLSYT) are compositionally biased toward polar residues. Residues 276 to 285 (PQLEYQQQQY) are compositionally biased toward low complexity. The span at 286–296 (PQPPLPPPPPQ) shows a compositional bias: pro residues. 2 stretches are compositionally biased toward polar residues: residues 310–321 (DNLSRPSPNEQH) and 354–372 (SEGS…LNNE). The span at 376–389 (ESSTSSSSTTVTST) shows a compositional bias: low complexity. Composition is skewed to polar residues over residues 413–435 (SRMN…TQNG) and 444–461 (LIPS…TGTD). Residues 574 to 591 (GPFSTSTSTSTTSPTLSS) are compositionally biased toward low complexity. Positions 599-608 (EPQNSTIANG) are enriched in polar residues. 2 stretches are compositionally biased toward low complexity: residues 609–641 (TSIR…RQLS) and 648–658 (QQQQQPNNNTN). The span at 703–714 (SKSDDDTDNMNK) shows a compositional bias: basic and acidic residues.

This sequence belongs to the HSF family.

It localises to the nucleus. Its function is as follows. Transcription factor that plays a role of activator of filamentous growth and which is involved in invasive growth at a high temperature. Required for human oral epithelium colonization and damage. Promotes filamentous growth in EFG1- and FLO8-dependent manners. Antagonizes functions of SFL1. The sequence is that of Transcription factor SFL2 (SFL2) from Candida albicans (strain SC5314 / ATCC MYA-2876) (Yeast).